A 106-amino-acid polypeptide reads, in one-letter code: Malonate decarboxylase acyl carrier protein (106 aa).

At Ser-28 the chain carries O-(phosphoribosyl dephospho-coenzyme A)serine.

This sequence belongs to the MdcC family. In terms of processing, covalently binds the prosthetic group of malonate decarboxylase.

The protein localises to the cytoplasm. Subunit of malonate decarboxylase, it is an acyl carrier protein to which acetyl and malonyl thioester residues are bound via a 2'-(5''-phosphoribosyl)-3'-dephospho-CoA prosthetic group and turn over during the catalytic mechanism. The sequence is that of Malonate decarboxylase acyl carrier protein from Stenotrophomonas maltophilia (strain K279a).